A 456-amino-acid polypeptide reads, in one-letter code: General transcription factor IIE subunit 1 (456 aa).

The HTH TFE/IIEalpha-type domain maps to 11-100 (LDDLVKMVIR…LWYIDYKHII (90 aa)). The C4-type zinc-finger motif lies at 129-157 (CQTCHKVYTALDIPKLLNMDTGALACEIC). The interval 345-402 (ESAPDSGDADGNGSNSGSGGSTIEGNDGGNGEHQNKKMKLDDSQTVSSMSQSDDDGKD) is disordered. Residues 347–357 (APDSGDADGNG) are compositionally biased toward low complexity. Positions 358-375 (SNSGSGGSTIEGNDGGNG) are enriched in gly residues. Residues 377 to 386 (HQNKKMKLDD) show a composition bias toward basic and acidic residues.

It belongs to the TFIIE alpha subunit family. TFIIE is a tetramer of two alpha and two beta subunits.

It is found in the nucleus. In terms of biological role, recruits TFIIH to the initiation complex and stimulates the RNA polymerase II C-terminal domain kinase and DNA-dependent ATPase activities of TFIIH. Both TFIIH and TFIIE are required for promoter clearance by RNA polymerase. This chain is General transcription factor IIE subunit 1 (gtf2e1-1), found in Dictyostelium discoideum (Social amoeba).